Here is a 173-residue protein sequence, read N- to C-terminus: Adenine phosphoribosyltransferase (173 aa).

This sequence belongs to the purine/pyrimidine phosphoribosyltransferase family. As to quaternary structure, homodimer.

Its subcellular location is the cytoplasm. It carries out the reaction AMP + diphosphate = 5-phospho-alpha-D-ribose 1-diphosphate + adenine. It participates in purine metabolism; AMP biosynthesis via salvage pathway; AMP from adenine: step 1/1. Functionally, catalyzes a salvage reaction resulting in the formation of AMP, that is energically less costly than de novo synthesis. This chain is Adenine phosphoribosyltransferase, found in Thermoanaerobacter pseudethanolicus (strain ATCC 33223 / 39E) (Clostridium thermohydrosulfuricum).